Consider the following 308-residue polypeptide: Probable 5-dehydro-4-deoxyglucarate dehydratase (308 aa).

It belongs to the DapA family.

The enzyme catalyses 5-dehydro-4-deoxy-D-glucarate + H(+) = 2,5-dioxopentanoate + CO2 + H2O. The protein operates within carbohydrate acid metabolism; D-glucarate degradation; 2,5-dioxopentanoate from D-glucarate: step 2/2. The chain is Probable 5-dehydro-4-deoxyglucarate dehydratase from Bacillus licheniformis (strain ATCC 14580 / DSM 13 / JCM 2505 / CCUG 7422 / NBRC 12200 / NCIMB 9375 / NCTC 10341 / NRRL NRS-1264 / Gibson 46).